Reading from the N-terminus, the 188-residue chain is ATP synthase subunit delta (188 aa).

Belongs to the ATPase delta chain family. F-type ATPases have 2 components, F(1) - the catalytic core - and F(0) - the membrane proton channel. F(1) has five subunits: alpha(3), beta(3), gamma(1), delta(1), epsilon(1). F(0) has three main subunits: a(1), b(2) and c(10-14). The alpha and beta chains form an alternating ring which encloses part of the gamma chain. F(1) is attached to F(0) by a central stalk formed by the gamma and epsilon chains, while a peripheral stalk is formed by the delta and b chains.

The protein resides in the cell membrane. In terms of biological role, f(1)F(0) ATP synthase produces ATP from ADP in the presence of a proton or sodium gradient. F-type ATPases consist of two structural domains, F(1) containing the extramembraneous catalytic core and F(0) containing the membrane proton channel, linked together by a central stalk and a peripheral stalk. During catalysis, ATP synthesis in the catalytic domain of F(1) is coupled via a rotary mechanism of the central stalk subunits to proton translocation. Its function is as follows. This protein is part of the stalk that links CF(0) to CF(1). It either transmits conformational changes from CF(0) to CF(1) or is implicated in proton conduction. This chain is ATP synthase subunit delta, found in Lawsonia intracellularis (strain PHE/MN1-00).